The primary structure comprises 561 residues: Putative transport protein YbjL (561 aa).

Transmembrane regions (helical) follow at residues 8-28 (LLNG…LCLG), 32-52 (LGSI…LLGQ), 66-86 (FMLF…SIFF), 94-114 (MLAL…GKLF), and 158-178 (NLSL…IVGA). 2 consecutive RCK C-terminal domains span residues 200–288 (RGLD…SFRN) and 292–373 (VFDR…RIGF). 5 consecutive transmembrane segments (helical) span residues 383–403 (LLAF…TFQF), 406–426 (FSFG…LGFL), 447–467 (FGLM…ISNG), 475–495 (MLIA…LFGA), and 540–560 (AIAN…WPGL).

This sequence belongs to the AAE transporter (TC 2.A.81) family. YbjL subfamily.

It localises to the cell membrane. The sequence is that of Putative transport protein YbjL from Salmonella arizonae (strain ATCC BAA-731 / CDC346-86 / RSK2980).